We begin with the raw amino-acid sequence, 447 residues long: Mannose/glucose-specific lectin (447 aa).

3 Jacalin-type lectin domains span residues 5–148, 153–294, and 300–443; these read MISV…FVKP, TISF…YVKP, and SISI…FVKP.

This sequence belongs to the jacalin lectin family. As to expression, expressed in seeds (at protein level).

Its activity is regulated as follows. Hemagglutinating activity is slightly inhibited by alpha-methyl-D-mannopyranoside. Its function is as follows. D-mannose/D-glucose-binding lectin that also binds derivatives N-acetyl-D-glucosamine and alpha-methyl-D-mannopyranoside. Does not bind D-galactose, L-Rhamnose, D-fructose, lactose or glycoproteins fetiun and mucin. Shows agglutinating activity towards human and rabbit erythrocytes. Also displays antimicrobial activity against L.infantum. This Parkia pendula (Inga pendula) protein is Mannose/glucose-specific lectin.